We begin with the raw amino-acid sequence, 153 residues long: Bacteriohemerythrin (153 aa).

Residues His-21, His-57, Glu-61, His-76, His-80, His-115, and Asp-120 each coordinate Fe cation.

This sequence belongs to the hemerythrin family. In terms of assembly, monomer.

Oxygen-binding protein. May be involved in a storage mechanism or for delivery to oxygen-requiring enzymes. The oxygen-binding site contains two iron atoms. This is Bacteriohemerythrin from Pseudomonas aeruginosa (strain UCBPP-PA14).